Reading from the N-terminus, the 712-residue chain is Golgin candidate 3 (712 aa).

The disordered stretch occupies residues 23 to 49 (DEEEDDLHKYGSANGVSNSDRRNSSGF). Residues 36-49 (NGVSNSDRRNSSGF) are compositionally biased toward polar residues. Residues 65 to 134 (AHHEIERYKA…LKEARTDISR (70 aa)) adopt a coiled-coil conformation. Positions 135–150 (GSNNYAIKGNNDQSPN) are enriched in polar residues. Disordered regions lie at residues 135–176 (GSNN…TDSF) and 306–347 (ESRK…MEQS). Coiled coils occupy residues 197–313 (QATE…LTNS), 340–558 (GKEE…LNRM), and 659–690 (LKDAEERERREAEEAAASKAKQDSERTRQEAA). Residues 328-344 (STLDKEKPESFPGKEEM) show a composition bias toward basic and acidic residues. The 52-residue stretch at 557 to 608 (RMSMESDYLVDRRIVIKLLVTYFQKNHNKEVLDLMVRMLGFSEEDKERIGAA) folds into the GRIP domain. The tract at residues 666-712 (ERREAEEAAASKAKQDSERTRQEAALHDSEFSTVPLRSSESNQRLSR) is disordered. Over residues 678-695 (AKQDSERTRQEAALHDSE) the composition is skewed to basic and acidic residues. Positions 696-712 (FSTVPLRSSESNQRLSR) are enriched in polar residues.

In terms of assembly, interacts with ARF1; preferentially with the active form of the protein.

The protein resides in the golgi apparatus. The protein localises to the endosome. Its function is as follows. Golgi matrix protein playing a role in tethering of vesicles to Golgi membranes and in maintaining the overall structure of the Golgi apparatus. The chain is Golgin candidate 3 (GC3) from Arabidopsis thaliana (Mouse-ear cress).